The sequence spans 582 residues: MDKYTAYVWPRLEPFLVGVLPATPPSKFSMHYLRKMASYVRTRDGCFPRLGWQMWRHIACGKLQLAEDLAWLYFETFDLLMPRSAEQRLEWAEALSQCHTQKELDRQRCKLSVDTLQFLLFLYLQQLNRISLRTSLIGEEWPSPRSRSPSSSSSERDAKISSQNKNWDVQAHLTFIQTHLPELLELLVEPGQLSSSGQVLRDSHLTSEAVESLSLLLEGSVSHSRTVHPVHKLLSRSQLQSQAGFSKLSCSYSLQQFQDFLRQALCLNPFGISNCSQSGKKLSWALQVEGTLKKAKIFRNTHAAPPGSRLVLMSQVCKQTLAKDSEKLNDVNIKLHRCSEAFIYLLSPLWSVTLDKCRNSTLVLGPVRTSVHIQSCENVRVVCVAGRLTIGGSFNCTIHSLTPTRPLLLPGNASLTLGPFHTQYPTLEDHMASAGLAVVPNLWNQPLLFGVEGSAPDTGCYRIQPPSEFYPLVIPFQMDGDNCEIPCSLPEDFQKALESREKTIEEWQKTVKDAHLNKAQRRQFQALVEQKFHEWLLETGQRQELDSLLPPTITPSSSAEHWSSNQNTLKEQTHEQPTGTVC.

The segment covering 140 to 153 (EWPSPRSRSPSSSS) has biased composition (low complexity). A disordered region spans residues 140–159 (EWPSPRSRSPSSSSSERDAK). In terms of domain architecture, C-CAP/cofactor C-like spans 305 to 451 (PPGSRLVLMS…LWNQPLLFGV (147 aa)). Low complexity predominate over residues 547 to 558 (SLLPPTITPSSS). Positions 547 to 582 (SLLPPTITPSSSAEHWSSNQNTLKEQTHEQPTGTVC) are disordered. Positions 559–582 (AEHWSSNQNTLKEQTHEQPTGTVC) are enriched in polar residues.

This sequence belongs to the TBCC family.

The protein resides in the cytoplasm. Its subcellular location is the cytoskeleton. It localises to the microtubule organizing center. It is found in the centrosome. The protein localises to the spindle pole. In terms of biological role, may play a role in the regulation of centrosome and Golgi apparatus positioning. The chain is TBCC domain-containing protein 1 (tbccd1) from Danio rerio (Zebrafish).